Consider the following 253-residue polypeptide: Imidazole glycerol phosphate synthase subunit HisF (253 aa).

Residues D11 and D130 contribute to the active site.

This sequence belongs to the HisA/HisF family. Heterodimer of HisH and HisF.

It is found in the cytoplasm. The catalysed reaction is 5-[(5-phospho-1-deoxy-D-ribulos-1-ylimino)methylamino]-1-(5-phospho-beta-D-ribosyl)imidazole-4-carboxamide + L-glutamine = D-erythro-1-(imidazol-4-yl)glycerol 3-phosphate + 5-amino-1-(5-phospho-beta-D-ribosyl)imidazole-4-carboxamide + L-glutamate + H(+). The protein operates within amino-acid biosynthesis; L-histidine biosynthesis; L-histidine from 5-phospho-alpha-D-ribose 1-diphosphate: step 5/9. Its function is as follows. IGPS catalyzes the conversion of PRFAR and glutamine to IGP, AICAR and glutamate. The HisF subunit catalyzes the cyclization activity that produces IGP and AICAR from PRFAR using the ammonia provided by the HisH subunit. The chain is Imidazole glycerol phosphate synthase subunit HisF from Thermoanaerobacter sp. (strain X514).